The following is a 456-amino-acid chain: Cysteine--tRNA ligase (456 aa).

Cysteine 28 serves as a coordination point for Zn(2+). The 'HIGH' region motif lies at 30–40 (ITVYDHCHLGH). Zn(2+) is bound by residues cysteine 209, histidine 234, and glutamate 238. Residues 266–270 (KMAKS) carry the 'KMSKS' region motif. Lysine 269 lines the ATP pocket.

This sequence belongs to the class-I aminoacyl-tRNA synthetase family. As to quaternary structure, monomer. Zn(2+) is required as a cofactor.

It is found in the cytoplasm. The enzyme catalyses tRNA(Cys) + L-cysteine + ATP = L-cysteinyl-tRNA(Cys) + AMP + diphosphate. This Legionella pneumophila subsp. pneumophila (strain Philadelphia 1 / ATCC 33152 / DSM 7513) protein is Cysteine--tRNA ligase.